The following is a 129-amino-acid chain: Ribosome-binding factor A (129 aa).

The protein belongs to the RbfA family. Monomer. Binds 30S ribosomal subunits, but not 50S ribosomal subunits or 70S ribosomes.

It is found in the cytoplasm. Functionally, one of several proteins that assist in the late maturation steps of the functional core of the 30S ribosomal subunit. Associates with free 30S ribosomal subunits (but not with 30S subunits that are part of 70S ribosomes or polysomes). Required for efficient processing of 16S rRNA. May interact with the 5'-terminal helix region of 16S rRNA. The chain is Ribosome-binding factor A from Desulfosudis oleivorans (strain DSM 6200 / JCM 39069 / Hxd3) (Desulfococcus oleovorans).